The following is a 354-amino-acid chain: UDP-3-O-acylglucosamine N-acyltransferase (354 aa).

Catalysis depends on histidine 257, which acts as the Proton acceptor.

It belongs to the transferase hexapeptide repeat family. LpxD subfamily. As to quaternary structure, homotrimer.

The enzyme catalyses a UDP-3-O-[(3R)-3-hydroxyacyl]-alpha-D-glucosamine + a (3R)-hydroxyacyl-[ACP] = a UDP-2-N,3-O-bis[(3R)-3-hydroxyacyl]-alpha-D-glucosamine + holo-[ACP] + H(+). The protein operates within bacterial outer membrane biogenesis; LPS lipid A biosynthesis. Catalyzes the N-acylation of UDP-3-O-acylglucosamine using 3-hydroxyacyl-ACP as the acyl donor. Is involved in the biosynthesis of lipid A, a phosphorylated glycolipid that anchors the lipopolysaccharide to the outer membrane of the cell. The sequence is that of UDP-3-O-acylglucosamine N-acyltransferase from Rhizobium johnstonii (strain DSM 114642 / LMG 32736 / 3841) (Rhizobium leguminosarum bv. viciae).